Here is a 1754-residue protein sequence, read N- to C-terminus: Probable outer membrane protein PmpB (1754 aa).

The first 14 residues, 1–14, serve as a signal peptide directing secretion; the sequence is MSSMKWLSATAVFA. 2 stretches are compositionally biased toward low complexity: residues 68-105 and 212-232; these read NIPTTDTTTPTNSNSSSSNGETASVSEDSDSTTTTPDP and SETSGSSSSSGNDSVSSPSSS. Disordered stretches follow at residues 68-109, 190-235, 252-271, 397-438, 621-668, and 1299-1332; these read NIPT…KGGG, SSNS…SRAE, PAAQTDTETSTPSHKPGSGG, NADA…ATAK, AAEN…STPS, and TSSASGGSGVSSSIPTNPKRISAAAPSGSAATTP. Polar residues-rich tracts occupy residues 252-264 and 402-412; these read PAAQTDTETSTPS and ASSSPQSGSGA. 4 stretches are compositionally biased toward low complexity: residues 413 to 427, 636 to 668, 1299 to 1311, and 1320 to 1332; these read TTVSNSGDSSSGSDS, PTADTAEQPAAASAATSTPESAPVVSTALSTPS, TSSASGGSGVSSS, and SAAAPSGSAATTP. The region spanning 1461-1754 is the Autotransporter domain; it reads DDIAYNNFWV…MTSCGARMIF (294 aa).

Belongs to the PMP outer membrane protein family.

The protein resides in the secreted. The protein localises to the cell wall. Its subcellular location is the cell outer membrane. In Chlamydia trachomatis serovar D (strain ATCC VR-885 / DSM 19411 / UW-3/Cx), this protein is Probable outer membrane protein PmpB (pmpB).